Reading from the N-terminus, the 146-residue chain is D-aminoacyl-tRNA deacylase (146 aa).

Positions 137–138 (GP) match the Gly-cisPro motif, important for rejection of L-amino acids motif.

The protein belongs to the DTD family. As to quaternary structure, homodimer.

The protein localises to the cytoplasm. The enzyme catalyses glycyl-tRNA(Ala) + H2O = tRNA(Ala) + glycine + H(+). It catalyses the reaction a D-aminoacyl-tRNA + H2O = a tRNA + a D-alpha-amino acid + H(+). Its function is as follows. An aminoacyl-tRNA editing enzyme that deacylates mischarged D-aminoacyl-tRNAs. Also deacylates mischarged glycyl-tRNA(Ala), protecting cells against glycine mischarging by AlaRS. Acts via tRNA-based rather than protein-based catalysis; rejects L-amino acids rather than detecting D-amino acids in the active site. By recycling D-aminoacyl-tRNA to D-amino acids and free tRNA molecules, this enzyme counteracts the toxicity associated with the formation of D-aminoacyl-tRNA entities in vivo and helps enforce protein L-homochirality. This Shouchella clausii (strain KSM-K16) (Alkalihalobacillus clausii) protein is D-aminoacyl-tRNA deacylase.